A 3914-amino-acid chain; its full sequence is Trichosetin synthetase PKS-NRPS1 (3914 aa).

The region spanning 4–420 is the Ketosynthase family 3 (KS3) domain; the sequence is NEPIAIIGSA…GTNAHAIIEA (417 aa). Catalysis depends on for beta-ketoacyl synthase activity residues C177, H301, and H340. The malonyl-CoA:ACP transacylase (MAT) domain stretch occupies residues 525-847; that stretch reads VLTGQGAQWP…REKDDIQQFA (323 aa). The segment at 913–1047 is N-terminal hotdog fold; it reads HPILGRRCHD…AHVKASLSVP (135 aa). The segment at 913-1214 is dehydratase (DH) domain; the sequence is HPILGRRCHD…MELVPFSPAT (302 aa). One can recognise a PKS/mFAS DH domain in the interval 913-1216; that stretch reads HPILGRRCHD…LVPFSPATPE (304 aa). Residue H946 is the Proton acceptor; for dehydratase activity of the active site. The interval 1062–1216 is C-terminal hotdog fold; sequence LRKVEVDRFY…LVPFSPATPE (155 aa). Catalysis depends on D1122, which acts as the Proton donor; for dehydratase activity. The segment at 1364–1593 is methyltransferase (MT) domain; it reads EGFGLDLVNK…DLPETKSTEL (230 aa). Residues 2083-2255 form a ketoreductase (KR) domain region; that stretch reads TFLLIGLSGE…VAASSIDISS (173 aa). Residues 2356–2436 enclose the Carrier 1 domain; it reads LADVKTKADA…DLIEESLNLI (81 aa). S2396 is modified (O-(pantetheine 4'-phosphoryl)serine). A disordered region spans residues 2447-2518; the sequence is EAGSTPTTQP…DSTDNSTPLK (72 aa). A compositionally biased stretch (polar residues) spans 2481-2500; the sequence is QQTGSDSSRSPIDTPLTSME. The condensation (C) domain stretch occupies residues 2529–2956; it reads SYGQAGFWFL…VQGTNKAADT (428 aa). Residues 2991–3388 are adenylation (A) (KR) domain; that stretch reads QTIQANSTKV…LLFCDGRLED (398 aa). The Carrier 2 domain occupies 3502–3579; sequence GTLTVAEQRL…TMAVVLESCG (78 aa). S3539 carries the post-translational modification O-(pantetheine 4'-phosphoryl)serine. A reductase (RED) domain region spans residues 3615–3831; the sequence is LTGSAGYLGR…VLPTGDIVKA (217 aa).

The protein in the C-terminal section; belongs to the NRP synthetase family.

The catalysed reaction is L-serine + 7 malonyl-CoA + acetyl-CoA + 2 S-adenosyl-L-methionine + ATP + 8 NADPH + 11 H(+) = (5S)-3-[(2E,6R,8E,10E,12E)-2,6-dimethyltetradeca-2,8,10,12-tetraenoyl]-5-(hydroxymethyl)pyrrolidine-2,4-dione + AMP + 2 S-adenosyl-L-homocysteine + 7 CO2 + diphosphate + 8 NADP(+) + 8 CoA + 6 H2O. Its pathway is mycotoxin biosynthesis. In terms of biological role, hybrid PKS-NRPS synthetase; part of the gene cluster that mediates the biosynthesis of trichosetin, a trans-fused decalin-containing tetramic acid with antimicrobial activity. The PKS module of PKS-NRPS1 together with the enoylreductase (ER) catalyze the formation of the polyketide unit which is then conjugated to L-serine by the condensation domain of the PKS-NRPS1 NRPS module. Activity of the Dieckmann cyclase domain (RED) results in release of the Dieckmann product intermediate. Diels-Alderase (DA) is involved in endo-selective Diels-Alder cycloaddition to form the decalin ring, leading to the production of N-desmethylequisetin also called trichosetin. The cluster does not contain the equisetin N-methyltransferase and consequently, trichosetin is isolated as final product. This is Trichosetin synthetase PKS-NRPS1 from Gibberella fujikuroi (strain CBS 195.34 / IMI 58289 / NRRL A-6831) (Bakanae and foot rot disease fungus).